Consider the following 173-residue polypeptide: NADH-ubiquinone oxidoreductase chain 6 (173 aa).

5 consecutive transmembrane segments (helical) span residues 1–21, 27–47, 48–68, 87–107, and 139–159; these read MTYF…AVAS, YGVV…LSLG, ISFV…VVFV, VIGY…IGGF, and CGVG…FVVL.

Belongs to the complex I subunit 6 family.

It localises to the mitochondrion membrane. It catalyses the reaction a ubiquinone + NADH + 5 H(+)(in) = a ubiquinol + NAD(+) + 4 H(+)(out). Its function is as follows. Core subunit of the mitochondrial membrane respiratory chain NADH dehydrogenase (Complex I) that is believed to belong to the minimal assembly required for catalysis. Complex I functions in the transfer of electrons from NADH to the respiratory chain. The immediate electron acceptor for the enzyme is believed to be ubiquinone. This is NADH-ubiquinone oxidoreductase chain 6 (MT-ND6) from Alca torda (Razorbill).